Consider the following 246-residue polypeptide: Ribosome maturation factor RimM (246 aa).

Positions 1-15 are enriched in basic and acidic residues; the sequence is MKRKQESKGAGEKRQ. The tract at residues 1 to 63 is disordered; that stretch reads MKRKQESKGA…NPQFTTPNPD (63 aa). Residues 45–54 show a composition bias toward pro residues; sequence VPSPQSPIPN. The 82-residue stretch at 158–239 folds into the PRC barrel domain; that stretch reads GEDEYHVVDL…RIEITPPPGL (82 aa).

It belongs to the RimM family. As to quaternary structure, binds ribosomal protein uS19.

The protein localises to the cytoplasm. In terms of biological role, an accessory protein needed during the final step in the assembly of 30S ribosomal subunit, possibly for assembly of the head region. Essential for efficient processing of 16S rRNA. May be needed both before and after RbfA during the maturation of 16S rRNA. It has affinity for free ribosomal 30S subunits but not for 70S ribosomes. The sequence is that of Ribosome maturation factor RimM from Nostoc sp. (strain PCC 7120 / SAG 25.82 / UTEX 2576).